A 340-amino-acid polypeptide reads, in one-letter code: Cytosolic Fe-S cluster assembly factor NBP35 (340 aa).

4 residues coordinate [4Fe-4S] cluster: C31, C45, C48, and C54. An ATP-binding site is contributed by 84 to 91 (GKGGVGKS). The [4Fe-4S] cluster site is built by C257 and C260.

It belongs to the Mrp/NBP35 ATP-binding proteins family. NUBP1/NBP35 subfamily. As to quaternary structure, heterotetramer of 2 NBP35 and 2 CFD1 chains. [4Fe-4S] cluster serves as cofactor.

The protein localises to the cytoplasm. Its function is as follows. Component of the cytosolic iron-sulfur (Fe/S) protein assembly (CIA) machinery. Required for maturation of extramitochondrial Fe-S proteins. The NBP35-CFD1 heterotetramer forms a Fe-S scaffold complex, mediating the de novo assembly of an Fe-S cluster and its transfer to target apoproteins. The chain is Cytosolic Fe-S cluster assembly factor NBP35 from Phaeosphaeria nodorum (strain SN15 / ATCC MYA-4574 / FGSC 10173) (Glume blotch fungus).